The chain runs to 603 residues: Elongation factor 4 (603 aa).

The tr-type G domain maps to 7–189 (SRLRNFCIIA…AVVDRIPSPK (183 aa)). GTP contacts are provided by residues 19-24 (DHGKST) and 136-139 (NKVD).

Belongs to the TRAFAC class translation factor GTPase superfamily. Classic translation factor GTPase family. LepA subfamily.

It localises to the cell inner membrane. The enzyme catalyses GTP + H2O = GDP + phosphate + H(+). Required for accurate and efficient protein synthesis under certain stress conditions. May act as a fidelity factor of the translation reaction, by catalyzing a one-codon backward translocation of tRNAs on improperly translocated ribosomes. Back-translocation proceeds from a post-translocation (POST) complex to a pre-translocation (PRE) complex, thus giving elongation factor G a second chance to translocate the tRNAs correctly. Binds to ribosomes in a GTP-dependent manner. The polypeptide is Elongation factor 4 (Prochlorococcus marinus (strain NATL1A)).